The chain runs to 181 residues: MICGIDEVGRGCIFGPILSAAVVFKKKPSFIKELDDSKKLKKEKREYLSSLILKNSYYAFAEISNITIEKINIHNASLLAMQTAYENLKLNCSLVLVDGKFVPKITAKNVKAIIKGDSIIDEIKAASIIAKVKRDKLMDEYDKIYPLYLLKKNKGYPTKEHKNAIKKYGVLSLHRKNFKLI.

Residues Met1–Ile181 enclose the RNase H type-2 domain. Asp6, Glu7, and Asp98 together coordinate a divalent metal cation.

The protein belongs to the RNase HII family. Mn(2+) is required as a cofactor. Requires Mg(2+) as cofactor.

It is found in the cytoplasm. It catalyses the reaction Endonucleolytic cleavage to 5'-phosphomonoester.. Its function is as follows. Endonuclease that specifically degrades the RNA of RNA-DNA hybrids. The protein is Ribonuclease HII of Borreliella burgdorferi (strain ZS7) (Borrelia burgdorferi).